The primary structure comprises 573 residues: Chromosomal replication initiator protein DnaA (573 aa).

A domain I, interacts with DnaA modulators region spans residues 1–85 (MSQNSSSLLE…TKVLSMRMGR (85 aa)). A domain II region spans residues 85–231 (RSFSLAVSVE…TPAHNPNREV (147 aa)). The interval 91–232 (VSVEPSRDGE…PAHNPNREVS (142 aa)) is disordered. Residues 116–169 (PYPGQGPQSPQGQQGQQGQHPVQQEVRAHAPAPHQQGQHQAAQHQPPANQAPGQ) are compositionally biased toward low complexity. The segment covering 178-191 (QASQSAGAWEQTHS) has biased composition (polar residues). Pro residues predominate over residues 202 to 213 (SPAPVEPPPQPA). Residues 232-448 (SLNPKYTFEN…GALIRVSAYS (217 aa)) form a domain III, AAA+ region region. The ATP site is built by glycine 276, glycine 278, lysine 279, and threonine 280. Residues 449–573 (SLINQPIDKE…TQLIKSRGRN (125 aa)) are domain IV, binds dsDNA.

Belongs to the DnaA family. In terms of assembly, oligomerizes as a right-handed, spiral filament on DNA at oriC.

The protein resides in the cytoplasm. Plays an essential role in the initiation and regulation of chromosomal replication. ATP-DnaA binds to the origin of replication (oriC) to initiate formation of the DNA replication initiation complex once per cell cycle. Binds the DnaA box (a 9 base pair repeat at the origin) and separates the double-stranded (ds)DNA. Forms a right-handed helical filament on oriC DNA; dsDNA binds to the exterior of the filament while single-stranded (ss)DNA is stabiized in the filament's interior. The ATP-DnaA-oriC complex binds and stabilizes one strand of the AT-rich DNA unwinding element (DUE), permitting loading of DNA polymerase. After initiation quickly degrades to an ADP-DnaA complex that is not apt for DNA replication. Binds acidic phospholipids. This is Chromosomal replication initiator protein DnaA from Corynebacterium efficiens (strain DSM 44549 / YS-314 / AJ 12310 / JCM 11189 / NBRC 100395).